The chain runs to 166 residues: Interferon gamma (166 aa).

The signal sequence occupies residues 1-23 (MKYTSSFLALLLSVLLGFSGSYG). The residue at position 24 (Gln-24) is a Pyrrolidone carboxylic acid. Asn-39 and Asn-106 each carry an N-linked (GlcNAc...) asparagine glycan.

It belongs to the type II (or gamma) interferon family. As to quaternary structure, homodimer. Interacts with IFNGR1 (via extracellular domain); this interaction promotes IFNGR1 dimerization. As to expression, released primarily from activated T lymphocytes.

It localises to the secreted. Functionally, type II interferon produced by immune cells such as T-cells and NK cells that plays crucial roles in antimicrobial, antiviral, and antitumor responses by activating effector immune cells and enhancing antigen presentation. Primarily signals through the JAK-STAT pathway after interaction with its receptor IFNGR1 to affect gene regulation. Upon IFNG binding, IFNGR1 intracellular domain opens out to allow association of downstream signaling components JAK2, JAK1 and STAT1, leading to STAT1 activation, nuclear translocation and transcription of IFNG-regulated genes. Many of the induced genes are transcription factors such as IRF1 that are able to further drive regulation of a next wave of transcription. Plays a role in class I antigen presentation pathway by inducing a replacement of catalytic proteasome subunits with immunoproteasome subunits. In turn, increases the quantity, quality, and repertoire of peptides for class I MHC loading. Increases the efficiency of peptide generation also by inducing the expression of activator PA28 that associates with the proteasome and alters its proteolytic cleavage preference. Up-regulates as well MHC II complexes on the cell surface by promoting expression of several key molecules such as cathepsins B/CTSB, H/CTSH, and L/CTSL. Participates in the regulation of hematopoietic stem cells during development and under homeostatic conditions by affecting their development, quiescence, and differentiation. The chain is Interferon gamma (IFNG) from Capra hircus (Goat).